Here is a 713-residue protein sequence, read N- to C-terminus: MIEYRKSVTVHGREIGLSTGVLAQLAGGSVLVQSGETAVLVTATMASKPREGIDFFPLLVDYEERLYAAGRIPGSFVRREGRPPEKAILAARLIDRPLRPLFPKGFINDVQIVATVLALDMNVPPDILAILGASTATMLAGIPFDGPVAATRVGLMGDDFIINPTYKEIEEGELDLVVAGTKNGIMMVEAGANCLPEEDIIDAIDYGYEAVQAMLTAQEEFIRDLKIEPMAFVAPANDPVLVSFVEEKASEAVAEVLRSFELSKDERDAKLDAIEAELGTTFAGLGEEDPLREKAAANASKLPALFKSTTKKLMRKQILVEGKRVDGRSLDEVRPISSAVRVIPRVHGCGLFTRGTTQVLSVVTLGTASDAQELDDLHPDDSKRYMHHYNFPGFSVGEVKPLRGVGRREVGHGALAERAIVPILPEHEQFPYVIRVVSEVLSSNGSTSMGSVCASTLALMDAGVPIREPVSGVAMGLIKEGDEVRILTDIQGIEDFLGDMDFKVAGTRDGITALQMDIKIQGITLQILEAAIQQSKAGRLHILEKMLIAIDKPRVELSPYAPRLLTLKIPVDMIGLVIGPGGKTIKRIVEETGAKVDIEDDGTVVVSSIDGAKALAAKQIIEGMTRTVEVDKVYLGTVTRIIPNLGAFVEVMPGKEGLVHISQLAEHRVRKVEDELNVGDEVVVKVKEIDQKGRINLTRRGIHPSEVEEARGQ.

Residues Asp495 and Asp501 each contribute to the Mg(2+) site. One can recognise a KH domain in the interval 562–621; sequence PRLLTLKIPVDMIGLVIGPGGKTIKRIVEETGAKVDIEDDGTVVVSSIDGAKALAAKQII. Residues 631 to 700 enclose the S1 motif domain; sequence DKVYLGTVTR…QKGRINLTRR (70 aa).

The protein belongs to the polyribonucleotide nucleotidyltransferase family. It depends on Mg(2+) as a cofactor.

The protein localises to the cytoplasm. It carries out the reaction RNA(n+1) + phosphate = RNA(n) + a ribonucleoside 5'-diphosphate. Functionally, involved in mRNA degradation. Catalyzes the phosphorolysis of single-stranded polyribonucleotides processively in the 3'- to 5'-direction. In Gloeobacter violaceus (strain ATCC 29082 / PCC 7421), this protein is Polyribonucleotide nucleotidyltransferase.